Here is a 1647-residue protein sequence, read N- to C-terminus: Transcription elongation factor SPT6 homolog (1647 aa).

Positions 1-209 (MARNAISDDE…SKKKKYRQGS (209 aa)) are disordered. Residues 7–20 (SDDEEDHELEDDDG) are compositionally biased toward acidic residues. A compositionally biased stretch (basic and acidic residues) spans 21–30 (EPVHGDPAEH). Over residues 31-67 (DENDDEEDDDDVGNEYENDGFIVNDEDEEEEEEEDEE) the composition is skewed to acidic residues. Residues 103-114 (KFKKRQYKRLKK) show a composition bias toward basic residues. The span at 132-151 (DSRGGTRRSAEDKIKDRLFD) shows a compositional bias: basic and acidic residues. Residues 152–191 (DVDVDDPPDDVGDEEDLVVEEDVVGSEDEMADFIVDEDDE) are compositionally biased toward acidic residues. One can recognise an S1 motif domain in the interval 1103–1174 (GRIVQASVRR…QRYQVFLICK (72 aa)). The interval 1429–1647 (PMRSPADHGS…RKSDGGGGGW (219 aa)) is disordered. 2 consecutive repeat copies span residues 1443–1444 (GW) and 1452–1453 (GW). Residues 1443 to 1647 (GWGSSQSEGG…RKSDGGGGGW (205 aa)) are 12 X 2 AA repeats of [WG]-[GW] repeats. Residues 1462–1471 (SGRGGEYRNG) are compositionally biased toward gly residues. A compositionally biased stretch (basic and acidic residues) spans 1496–1507 (RRDDMNSDRQDG). 6 tandem repeats follow at residues 1511-1512 (WG), 1522-1523 (GW), 1530-1531 (GW), 1547-1548 (GW), 1563-1564 (WG), and 1574-1575 (GW). Gly residues-rich tracts occupy residues 1519 to 1532 (ADGGWGNSGGGGWG), 1539 to 1552 (KTGGGSTGGWGSES), 1561 to 1579 (GSWGSGSGGGGSGGWGNDS), and 1588 to 1600 (GGFGSGSGGGGSD). 4 consecutive repeat copies span residues 1601-1602 (WG), 1615-1616 (GW), 1630-1631 (GW), and 1646-1647 (GW).

It belongs to the SPT6 family. As to quaternary structure, interacts (via N-terminus) with IWS1. In terms of tissue distribution, expressed in shoot apical meristem, leaf primordia, vasculature of young leaves, inflorescence meristem, floral meristem, young floral organs, developing ovules and anthers.

It localises to the nucleus. Its function is as follows. Transcription elongation factor that enhances the transcription elongation by RNA polymerase II (RNAPII). Plays an important role in regulating embryo apical and basal patterning during early embryogenesis, partly through negative regulation of the transcription factors PHABULOSA and PHAVOLUTA. This is Transcription elongation factor SPT6 homolog from Arabidopsis thaliana (Mouse-ear cress).